Here is a 125-residue protein sequence, read N- to C-terminus: Small ribosomal subunit protein uS13 (125 aa).

The interval 92 to 125 (RRSLPARGQNTQTNARTRKGRRKTVAGKKKAVKK) is disordered. Basic residues predominate over residues 107–125 (RTRKGRRKTVAGKKKAVKK).

This sequence belongs to the universal ribosomal protein uS13 family. In terms of assembly, part of the 30S ribosomal subunit. Forms a loose heterodimer with protein S19. Forms two bridges to the 50S subunit in the 70S ribosome.

Its function is as follows. Located at the top of the head of the 30S subunit, it contacts several helices of the 16S rRNA. In the 70S ribosome it contacts the 23S rRNA (bridge B1a) and protein L5 of the 50S subunit (bridge B1b), connecting the 2 subunits; these bridges are implicated in subunit movement. Contacts the tRNAs in the A and P-sites. This is Small ribosomal subunit protein uS13 from Chlorobium phaeobacteroides (strain BS1).